A 150-amino-acid chain; its full sequence is SsrA-binding protein (150 aa).

It belongs to the SmpB family.

It localises to the cytoplasm. Functionally, required for rescue of stalled ribosomes mediated by trans-translation. Binds to transfer-messenger RNA (tmRNA), required for stable association of tmRNA with ribosomes. tmRNA and SmpB together mimic tRNA shape, replacing the anticodon stem-loop with SmpB. tmRNA is encoded by the ssrA gene; the 2 termini fold to resemble tRNA(Ala) and it encodes a 'tag peptide', a short internal open reading frame. During trans-translation Ala-aminoacylated tmRNA acts like a tRNA, entering the A-site of stalled ribosomes, displacing the stalled mRNA. The ribosome then switches to translate the ORF on the tmRNA; the nascent peptide is terminated with the 'tag peptide' encoded by the tmRNA and targeted for degradation. The ribosome is freed to recommence translation, which seems to be the essential function of trans-translation. In Rubrobacter xylanophilus (strain DSM 9941 / JCM 11954 / NBRC 16129 / PRD-1), this protein is SsrA-binding protein.